A 237-amino-acid chain; its full sequence is ATP synthase subunit a (237 aa).

A run of 4 helical transmembrane segments spans residues 17–37 (LSDM…AVAA), 78–98 (LGVT…PFWL), 178–198 (ILLG…CGSI), and 201–221 (MVIM…AFIF).

Belongs to the ATPase A chain family. In terms of assembly, F-type ATPases have 2 components, CF(1) - the catalytic core - and CF(0) - the membrane proton channel. CF(1) has five subunits: alpha(3), beta(3), gamma(1), delta(1), epsilon(1). CF(0) has three main subunits: a(1), b(2) and c(9-12). The alpha and beta chains form an alternating ring which encloses part of the gamma chain. CF(1) is attached to CF(0) by a central stalk formed by the gamma and epsilon chains, while a peripheral stalk is formed by the delta and b chains.

It is found in the cell membrane. Functionally, key component of the proton channel; it plays a direct role in the translocation of protons across the membrane. The sequence is that of ATP synthase subunit a from Bacillus caldotenax.